The following is a 210-amino-acid chain: Ribosomal RNA small subunit methyltransferase G (210 aa).

S-adenosyl-L-methionine is bound by residues Gly-76, Met-81, Val-127–Glu-128, and Arg-145.

The protein belongs to the methyltransferase superfamily. RNA methyltransferase RsmG family.

Its subcellular location is the cytoplasm. It carries out the reaction guanosine(527) in 16S rRNA + S-adenosyl-L-methionine = N(7)-methylguanosine(527) in 16S rRNA + S-adenosyl-L-homocysteine. Specifically methylates the N7 position of guanine in position 527 of 16S rRNA. The protein is Ribosomal RNA small subunit methyltransferase G of Acinetobacter baumannii (strain SDF).